Here is a 100-residue protein sequence, read N- to C-terminus: Urease subunit gamma (100 aa).

It belongs to the urease gamma subunit family. Heterotrimer of UreA (gamma), UreB (beta) and UreC (alpha) subunits. Three heterotrimers associate to form the active enzyme.

It localises to the cytoplasm. The enzyme catalyses urea + 2 H2O + H(+) = hydrogencarbonate + 2 NH4(+). The protein operates within nitrogen metabolism; urea degradation; CO(2) and NH(3) from urea (urease route): step 1/1. The protein is Urease subunit gamma of Burkholderia thailandensis (strain ATCC 700388 / DSM 13276 / CCUG 48851 / CIP 106301 / E264).